Consider the following 660-residue polypeptide: CXXC-type zinc finger protein 1 (660 aa).

N-acetylmethionine is present on methionine 1. Acidic residues predominate over residues 1-14 (MEGDGSDLEPPDAG). A disordered region spans residues 1–20 (MEGDGSDLEPPDAGDDSKSE). 2 positions are modified to phosphoserine: serine 6 and serine 19. The PHD-type zinc finger occupies 28 to 76 (YCICRKPDINCFMIGCDNCNEWFHGDCIRITEKMAKAIREWYCRECREK). Residues 91–120 (ERDGSERAGSEPRDEGGGRKRPASDPELQR) show a composition bias toward basic and acidic residues. Residues 91–166 (ERDGSERAGS…QQQQQQQQQI (76 aa)) are disordered. The residue at position 124 (serine 124) is a Phosphoserine. The CXXC-type zinc-finger motif lies at 164–213 (QQIKRSARMCGECEACRRTEDCGHCDFCRDMKKFGGPNKIRQKCRLRQCQ). Zn(2+)-binding residues include cysteine 173, cysteine 176, cysteine 179, cysteine 185, cysteine 188, cysteine 191, cysteine 207, and cysteine 212. Disordered regions lie at residues 223–287 (FPSS…SDED) and 328–375 (AVKV…DPAS). Phosphoserine is present on serine 228. A Phosphothreonine modification is found at threonine 231. Lysine 254 is covalently cross-linked (Glycyl lysine isopeptide (Lys-Gly) (interchain with G-Cter in SUMO2)). A compositionally biased stretch (basic residues) spans 328-338 (AVKVKHVKRRE). The span at 339–349 (KKSEKKKEERY) shows a compositional bias: basic and acidic residues. Residues 350–362 (KRHRQKQKHKDKW) are compositionally biased toward basic residues. A compositionally biased stretch (basic and acidic residues) spans 363 to 372 (KHPERADAKD). Positions 426–479 (AEEHGKKLLERIRREQQSARTRLQEMERRFHELEAIILRAKQQAVREDEENNEN) form a coiled coil.

Component of the SET1 complex, at least composed of the catalytic subunit (SETD1A or SETD1B), WDR5, WDR82, RBBP5, ASH2L/ASH2, CXXC1/CFP1, HCFC1 and DPY30. Interacts with SETD1A. Interacts with ZNF335. Interacts with PRDM9; this interaction does not link PRDM9-activated recombination hotspot sites with DSB machinery and is not required for the hotspot recognition pathway. Interacts with histone H3K4me3. As to expression, expressed in seminiferous tubules and in both germ cells and Sertoli cells. Highly expressed in spermatogonia, weakly expressed in leptonema and zygonema, and then again high expression in pachynema and diplonema, decreasing to undetectable levels in spermatids.

The protein resides in the nucleus speckle. Its subcellular location is the nucleus. Its function is as follows. Transcriptional activator that exhibits a unique DNA binding specificity for CpG unmethylated motifs with a preference for CpGG. The sequence is that of CXXC-type zinc finger protein 1 (Cxxc1) from Mus musculus (Mouse).